A 393-amino-acid chain; its full sequence is Formate-dependent phosphoribosylglycinamide formyltransferase (393 aa).

Residues 22 to 23 (EL) and Glu-82 each bind N(1)-(5-phospho-beta-D-ribosyl)glycinamide. Residues Arg-114, Lys-155, 160–165 (SSGKGQ), 195–198 (EGFV), and Glu-203 contribute to the ATP site. The ATP-grasp domain maps to 119–308 (RLAAEELGLP…EFALHVRAFT (190 aa)). Glu-267 and Glu-279 together coordinate Mg(2+). Residues Asp-286, Lys-356, and 363 to 364 (RR) each bind N(1)-(5-phospho-beta-D-ribosyl)glycinamide.

This sequence belongs to the PurK/PurT family. In terms of assembly, homodimer.

The catalysed reaction is N(1)-(5-phospho-beta-D-ribosyl)glycinamide + formate + ATP = N(2)-formyl-N(1)-(5-phospho-beta-D-ribosyl)glycinamide + ADP + phosphate + H(+). Its pathway is purine metabolism; IMP biosynthesis via de novo pathway; N(2)-formyl-N(1)-(5-phospho-D-ribosyl)glycinamide from N(1)-(5-phospho-D-ribosyl)glycinamide (formate route): step 1/1. Involved in the de novo purine biosynthesis. Catalyzes the transfer of formate to 5-phospho-ribosyl-glycinamide (GAR), producing 5-phospho-ribosyl-N-formylglycinamide (FGAR). Formate is provided by PurU via hydrolysis of 10-formyl-tetrahydrofolate. This is Formate-dependent phosphoribosylglycinamide formyltransferase from Vibrio cholerae serotype O1 (strain M66-2).